The sequence spans 493 residues: 3-octaprenyl-4-hydroxybenzoate carboxy-lyase (493 aa).

Position 172 (asparagine 172) interacts with Mn(2+). Prenylated FMN contacts are provided by residues 175 to 177 (IYR), 189 to 191 (RWL), and 194 to 195 (RG). Glutamate 238 is a binding site for Mn(2+). Aspartate 287 serves as the catalytic Proton donor.

It belongs to the UbiD family. In terms of assembly, homohexamer. It depends on prenylated FMN as a cofactor. Mn(2+) serves as cofactor.

It localises to the cell membrane. The enzyme catalyses a 4-hydroxy-3-(all-trans-polyprenyl)benzoate + H(+) = a 2-(all-trans-polyprenyl)phenol + CO2. The protein operates within cofactor biosynthesis; ubiquinone biosynthesis. Catalyzes the decarboxylation of 3-octaprenyl-4-hydroxy benzoate to 2-octaprenylphenol, an intermediate step in ubiquinone biosynthesis. The polypeptide is 3-octaprenyl-4-hydroxybenzoate carboxy-lyase (Shewanella baltica (strain OS195)).